A 65-amino-acid polypeptide reads, in one-letter code: DNA gyrase inhibitor YacG (65 aa).

The Zn(2+) site is built by cysteine 9, cysteine 12, cysteine 28, and cysteine 32. A disordered region spans residues 45–65 (KRIPSSGDLSESDDWSEEPKQ). A compositionally biased stretch (acidic residues) spans 54–65 (SESDDWSEEPKQ).

Belongs to the DNA gyrase inhibitor YacG family. As to quaternary structure, interacts with GyrB. Requires Zn(2+) as cofactor.

Its function is as follows. Inhibits all the catalytic activities of DNA gyrase by preventing its interaction with DNA. Acts by binding directly to the C-terminal domain of GyrB, which probably disrupts DNA binding by the gyrase. In Shigella boydii serotype 18 (strain CDC 3083-94 / BS512), this protein is DNA gyrase inhibitor YacG.